The primary structure comprises 297 residues: Glycerol-3-phosphate dehydrogenase [NAD(P)+] (297 aa).

The NADPH site is built by Trp-11, Arg-30, and Lys-79. 3 residues coordinate sn-glycerol 3-phosphate: Lys-79, Gly-107, and Ser-109. Residue Ala-111 participates in NADPH binding. The sn-glycerol 3-phosphate site is built by Lys-161, Asp-214, Ser-224, Arg-225, and Asn-226. Lys-161 acts as the Proton acceptor in catalysis. Arg-225 contacts NADPH. Residues Val-249 and Glu-251 each coordinate NADPH.

It belongs to the NAD-dependent glycerol-3-phosphate dehydrogenase family.

The protein resides in the cytoplasm. It carries out the reaction sn-glycerol 3-phosphate + NAD(+) = dihydroxyacetone phosphate + NADH + H(+). It catalyses the reaction sn-glycerol 3-phosphate + NADP(+) = dihydroxyacetone phosphate + NADPH + H(+). It participates in membrane lipid metabolism; glycerophospholipid metabolism. Functionally, catalyzes the reduction of the glycolytic intermediate dihydroxyacetone phosphate (DHAP) to sn-glycerol 3-phosphate (G3P), the key precursor for phospholipid synthesis. In Wolinella succinogenes (strain ATCC 29543 / DSM 1740 / CCUG 13145 / JCM 31913 / LMG 7466 / NCTC 11488 / FDC 602W) (Vibrio succinogenes), this protein is Glycerol-3-phosphate dehydrogenase [NAD(P)+].